The chain runs to 537 residues: Senescence-associated carboxylesterase 101 (537 aa).

The N-terminal stretch at 1–27 is a signal peptide; it reads MESSSSLKGSALGKLVVTSGLLHSSWS. A helical transmembrane segment spans residues 140 to 160; sequence VIITGAALGGSVASLYTLWLL.

Part of a nuclear complex made of EDS1, PAD4 and SAG101, that can be redirected to the cytoplasm in the presence of an extranuclear form of EDS1. Interacts directly with EDS1. Expressed in senescing leaves.

Its subcellular location is the membrane. It localises to the nucleus. The protein resides in the cytoplasm. It carries out the reaction a carboxylic ester + H2O = an alcohol + a carboxylate + H(+). Its function is as follows. Acyl hydrolase that triggers the leaf senescence onset. Can use triolein as substrate to produce oleic acids. Involved in the EDS1-dependent intrinsic and indispensable resistance signaling pathway; together with PAD4, required for programmed cell death triggered by RPS4 in response to avirulent pathogens (e.g. P.syringae pv. tomato strain DC3000 and H.parasitica isolates CALA2 and EMWA1) and in restricting the growth of virulent pathogens (e.g. H.parasitica isolates NOCO2 and P.syringae pv. tomato strain DC3000 avrRps4). Contributes in reinforcing the immune response around hypersensitive response foci. Regulates the nuclear localization of EDS1. Essential for the RPP8/HRT-mediated resistance to the turnip crinkle virus (TCV). Involved in the post-invasion resistance to P.pachyrhizi in the mesophyll. In Arabidopsis thaliana (Mouse-ear cress), this protein is Senescence-associated carboxylesterase 101 (SAG101).